Consider the following 1312-residue polypeptide: Rho GTPase-activating protein gacG (1312 aa).

Disordered regions lie at residues 52 to 74, 111 to 158, 314 to 519, 762 to 831, 1185 to 1230, and 1282 to 1312; these read VENN…KRSQ, SNNN…SSSD, ISSS…PRNF, NSIS…SSTG, NNNN…SSSV, and TGTS…IVEE. 2 stretches are compositionally biased toward low complexity: residues 53–67 and 111–146; these read ENNN…NSEN and SNNN…YSPR. The segment covering 147–158 has biased composition (polar residues); that stretch reads NNNNNFTESSSD. Low complexity-rich tracts occupy residues 328-355, 373-397, and 414-436; these read TTAA…ANNS, HHSS…IGNS, and LNLT…NNGN. A compositionally biased stretch (polar residues) spans 437–449; that stretch reads EVIQSSSSTSSPR. Over residues 479–507 the composition is skewed to low complexity; that stretch reads SSTNSLNNSTSSLKSSNNNILQQQQQQQQ. Composition is skewed to polar residues over residues 508 to 518 and 763 to 776; these read HYDSAPTTPRN and SIST…GNIA. Low complexity predominate over residues 792–816; it reads NNNNNNNNNNNNNNNNNNNNNNNNN. The Rho-GAP domain occupies 1030–1212; sequence SKIDPITGFN…HHNSHHHRDN (183 aa). A compositionally biased stretch (basic residues) spans 1196 to 1210; that stretch reads HHHHHHHHHNSHHHR. 2 stretches are compositionally biased toward low complexity: residues 1213–1222 and 1282–1305; these read NNNNSNNNSS and TGTS…RSPS.

The protein localises to the cytoplasm. Functionally, rho GTPase-activating protein involved in the signal transduction pathway. This chain is Rho GTPase-activating protein gacG (gacG), found in Dictyostelium discoideum (Social amoeba).